The chain runs to 192 residues: UPF0149 protein VP2588 (192 aa).

The protein belongs to the UPF0149 family.

The protein is UPF0149 protein VP2588 of Vibrio parahaemolyticus serotype O3:K6 (strain RIMD 2210633).